The following is a 715-amino-acid chain: Myosin light chain kinase 3 (715 aa).

Residues 67-114 (VTLPNDPSSQHSPEAHTGASEPLKPVSAGESSKALQKAKEISVKSSEP) are disordered. Residues 404-659 (VNPVEVLGGG…ASGCMKHSWL (256 aa)) form the Protein kinase domain. Residues 410 to 418 (LGGGRFGQV) and lysine 433 each bind ATP. The Proton acceptor role is filled by aspartate 525.

Belongs to the protein kinase superfamily. CAMK Ser/Thr protein kinase family. Mg(2+) is required as a cofactor. Phosphorylated on serine residues.

It is found in the cytoplasm. It carries out the reaction L-seryl-[myosin light chain] + ATP = O-phospho-L-seryl-[myosin light chain] + ADP + H(+). The catalysed reaction is L-threonyl-[myosin light chain] + ATP = O-phospho-L-threonyl-[myosin light chain] + ADP + H(+). In terms of biological role, kinase that phosphorylates MYL2 in vitro. Increases cardiomyocyte contractility. Required for sarcomere formation in the developing heart. The sequence is that of Myosin light chain kinase 3 (mylk3) from Danio rerio (Zebrafish).